We begin with the raw amino-acid sequence, 362 residues long: Chorismate synthase (362 aa).

NADP(+) is bound at residue Arg-47. FMN-binding positions include 124–126 (RAS), Gly-286, 301–305 (KPTAT), and Arg-327.

This sequence belongs to the chorismate synthase family. As to quaternary structure, homotetramer. It depends on FMNH2 as a cofactor.

The catalysed reaction is 5-O-(1-carboxyvinyl)-3-phosphoshikimate = chorismate + phosphate. The protein operates within metabolic intermediate biosynthesis; chorismate biosynthesis; chorismate from D-erythrose 4-phosphate and phosphoenolpyruvate: step 7/7. Its function is as follows. Catalyzes the anti-1,4-elimination of the C-3 phosphate and the C-6 proR hydrogen from 5-enolpyruvylshikimate-3-phosphate (EPSP) to yield chorismate, which is the branch point compound that serves as the starting substrate for the three terminal pathways of aromatic amino acid biosynthesis. This reaction introduces a second double bond into the aromatic ring system. In Prochlorococcus marinus (strain SARG / CCMP1375 / SS120), this protein is Chorismate synthase.